Reading from the N-terminus, the 348-residue chain is Protein pelota homolog (348 aa).

The protein belongs to the eukaryotic release factor 1 family. Pelota subfamily. Monomer. The cofactor is a divalent metal cation.

The protein localises to the cytoplasm. In terms of biological role, may function in recognizing stalled ribosomes, interact with stem-loop structures in stalled mRNA molecules, and effect endonucleolytic cleavage of the mRNA. May play a role in the release non-functional ribosomes and degradation of damaged mRNAs. Has endoribonuclease activity. This Methanococcus maripaludis (strain C5 / ATCC BAA-1333) protein is Protein pelota homolog.